A 207-amino-acid chain; its full sequence is Oligoribonuclease (207 aa).

Residues 20–183 (LVWLDMEMTG…ADIHESIDEL (164 aa)) form the Exonuclease domain. The active site involves Y141.

The protein belongs to the oligoribonuclease family.

It localises to the cytoplasm. 3'-to-5' exoribonuclease specific for small oligoribonucleotides. The sequence is that of Oligoribonuclease from Paraburkholderia xenovorans (strain LB400).